The primary structure comprises 124 residues: Small ribosomal subunit protein uS12 (124 aa).

D89 is modified (3-methylthioaspartic acid).

The protein belongs to the universal ribosomal protein uS12 family. In terms of assembly, part of the 30S ribosomal subunit. Contacts proteins S8 and S17. May interact with IF1 in the 30S initiation complex.

Functionally, with S4 and S5 plays an important role in translational accuracy. Its function is as follows. Interacts with and stabilizes bases of the 16S rRNA that are involved in tRNA selection in the A site and with the mRNA backbone. Located at the interface of the 30S and 50S subunits, it traverses the body of the 30S subunit contacting proteins on the other side and probably holding the rRNA structure together. The combined cluster of proteins S8, S12 and S17 appears to hold together the shoulder and platform of the 30S subunit. This is Small ribosomal subunit protein uS12 from Sodalis glossinidius (strain morsitans).